The primary structure comprises 864 residues: Disintegrin and metalloproteinase domain-containing protein 15 (864 aa).

Residues 1–17 (MRLALLWALGLLGAGSP) form the signal peptide. Residues 18 to 45 (RPSPPLPNIGGTEEEQQASPERTLSGSM) form a disordered region. Residues 18 to 207 (RPSPPLPNIG…EQHHAHRLKR (190 aa)) constitute a propeptide that is removed on maturation. Over residues 34–45 (QASPERTLSGSM) the composition is skewed to polar residues. A Cysteine switch motif is present at residues 177–184 (HTCAPSWH). C179 lines the Zn(2+) pocket. The Extracellular segment spans residues 208-696 (DVVTETKIVE…TQLKATSSLT (489 aa)). Residues 214 to 415 (KIVELVIVAD…GMGSCLFERQ (202 aa)) enclose the Peptidase M12B domain. N-linked (GlcNAc...) asparagine glycosylation is present at N238. Cystine bridges form between C324–C410, C366–C394, C368–C377, and C481–C501. H349 serves as a coordination point for Zn(2+). The active site involves E350. Residues H353 and H359 each coordinate Zn(2+). N390 and N393 each carry an N-linked (GlcNAc...) asparagine glycan. One can recognise a Disintegrin domain in the interval 422-509 (SSLCGNMFVD…QCPSDIRLGD (88 aa)). N607 and N612 each carry an N-linked (GlcNAc...) asparagine glycan. 3 cysteine pairs are disulfide-bonded: C658-C668, C662-C674, and C676-C685. The EGF-like domain maps to 658–686 (CRRKCHGHGVCDSSGHCRCEEGWAPPDCM). The chain crosses the membrane as a helical span at residues 697 to 717 (TGLLLSLLLLLVLVLLGASYW). Phosphotyrosine; by HCK and LCK is present on residues Y716 and Y736. Residues 718–864 (HRARLHQRLC…PPPAASSLYL (147 aa)) are Cytoplasmic-facing. A disordered region spans residues 736-864 (YRAPQSCPPE…PPPAASSLYL (129 aa)). The segment covering 741 to 750 (SCPPERPGPP) has biased composition (pro residues). Polar residues predominate over residues 752 to 762 (RAQQMTGTKQA). Pro residues-rich tracts occupy residues 768–780 (PVPP…PNPV) and 814–825 (TKPPPPRKPLPA). 2 consecutive short sequence motifs (SH3-binding) follow at residues 816–822 (PPPPRKP) and 851–857 (RPAPPPP).

As to quaternary structure, interacts specifically with Src family protein-tyrosine kinases (PTKs). Interacts with ITAGV-ITGB3 (vitronectin receptor). Interacts with SH3GL2 and SNX9; this interaction occurs preferentially with ADAM15 precursor, rather than the processed form, suggesting it occurs in a secretory pathway compartment prior to the medial Golgi. Interacts with ITAG9-ITGB1. Interacts with SH3PXD2A. Interacts with ITAGV-ITGB1. Interacts with GRB2, HCK, ITSN1, ITSN2, LYN, MAPK1, MAPK3, NCF1, NCK1, nephrocystin, PTK6, SNX33, LCK and SRC. Zn(2+) serves as cofactor. In terms of processing, the precursor is cleaved by a furin endopeptidase. An additional membrane proximal site of cleavage affects a small percentage of the proteins and results in disulfide-linked fragments. The prodomain is apparently cleaved in several positions that are N-terminal of the furin cleavage site. May be partially sialylated. Post-translationally, phosphorylation increases association with PTKs. In terms of tissue distribution, expressed moderately in pericytes of retina. Expressed in testis and in spermatozoa from the caput, corpus, and cauda epididymis, as well as in non-capacitated and acrosome-reacted sperm (at protein level). Highly expressed in heart, brain, lung, and kidney. Expressed at lower levels in spleen, liver, testis and muscle.

It is found in the endomembrane system. The protein resides in the cell junction. It localises to the adherens junction. The protein localises to the cell projection. Its subcellular location is the cilium. It is found in the flagellum. The protein resides in the cytoplasmic vesicle. It localises to the secretory vesicle. The protein localises to the acrosome. Functionally, active metalloproteinase with gelatinolytic and collagenolytic activity. Plays a role in the wound healing process. Mediates both heterotypic intraepithelial cell/T-cell interactions and homotypic T-cell aggregation. Inhibits beta-1 integrin-mediated cell adhesion and migration of airway smooth muscle cells. Suppresses cell motility on or towards fibronectin possibly by driving alpha-v/beta-1 integrin (ITAGV-ITGB1) cell surface expression via ERK1/2 inactivation. Cleaves E-cadherin in response to growth factor deprivation. Plays a role in glomerular cell migration. Plays a role in pathological neovascularization. May play a role in cartilage remodeling. May be proteolytically processed, during sperm epididymal maturation and the acrosome reaction. May play a role in sperm-egg binding through its disintegrin domain. Interactions with egg membrane could be mediated via binding between the disintegrin-like domain to one or more integrin receptors on the egg. The polypeptide is Disintegrin and metalloproteinase domain-containing protein 15 (Adam15) (Mus musculus (Mouse)).